The chain runs to 101 residues: Gamma-secretase subunit PEN-2 (101 aa).

The Cytoplasmic portion of the chain corresponds to 1–17; that stretch reads MNLERVSNEEKLNLCRK. Residues 18 to 36 constitute an intramembrane region (helical); the sequence is YYLGGFAFLPFLWLVNIFW. The Cytoplasmic segment spans residues 37–57; the sequence is FFKEAFFAPAYTEQSQIKGYV. Residues 58 to 78 traverse the membrane as a helical segment; it reads WRSAVGFLFWVIVLTTWITIF. The Lumenal portion of the chain corresponds to 79–101; that stretch reads QIYRPRWGALGDYLSFTIPLGTP.

The protein belongs to the PEN-2 family. The functional gamma-secretase complex is composed of at least four polypeptides: a presenilin homodimer (PSEN1 or PSEN2), nicastrin (NCSTN), APH1 (APH1A or APH1B) and PSENEN.

The protein resides in the endoplasmic reticulum membrane. It is found in the golgi apparatus. It localises to the golgi stack membrane. Its subcellular location is the cell membrane. The protein localises to the membrane. Essential subunit of the gamma-secretase complex, an endoprotease complex that catalyzes the intramembrane cleavage of integral membrane proteins such as Notch receptors and APP (amyloid-beta precursor protein). The gamma-secretase complex plays a role in Notch and Wnt signaling cascades and regulation of downstream processes via its role in processing key regulatory proteins, and by regulating cytosolic CTNNB1 levels. PSENEN modulates both endoproteolysis of presenilin and gamma-secretase activity. The chain is Gamma-secretase subunit PEN-2 (Psenen) from Rattus norvegicus (Rat).